We begin with the raw amino-acid sequence, 367 residues long: NADH-ubiquinone oxidoreductase chain 1 (367 aa).

Helical transmembrane passes span 5–25 (IIIS…GIAY), 43–63 (PNFV…KLLL), 74–94 (IILF…GYAV), 108–128 (LGIY…LLAG), 152–172 (LVLS…NLSV), 179–199 (AIWN…GSVA), 225–245 (AVVF…MCIL), 265–285 (FFYS…NIFY), 301–321 (LIYG…FIWV), and 336–356 (FCWT…PCIL).

The protein belongs to the complex I subunit 1 family.

It localises to the mitochondrion inner membrane. It catalyses the reaction a ubiquinone + NADH + 5 H(+)(in) = a ubiquinol + NAD(+) + 4 H(+)(out). Functionally, core subunit of the mitochondrial membrane respiratory chain NADH dehydrogenase (Complex I) that is believed to belong to the minimal assembly required for catalysis. Complex I functions in the transfer of electrons from NADH to the respiratory chain. The immediate electron acceptor for the enzyme is believed to be ubiquinone. The chain is NADH-ubiquinone oxidoreductase chain 1 (ND1) from Podospora anserina (strain S / ATCC MYA-4624 / DSM 980 / FGSC 10383) (Pleurage anserina).